Consider the following 162-residue polypeptide: Caveolin-2 (162 aa).

At 1-86 (MGLETEKADV…FEISKYVIYK (86 aa)) the chain is on the cytoplasmic side. Tyrosine 19 carries the phosphotyrosine; by SRC modification. Phosphoserine occurs at positions 20 and 23. Tyrosine 27 bears the Phosphotyrosine; by SRC mark. At serine 36 the chain carries Phosphoserine. An intramembrane region (helical) is located at residues 87 to 107 (FLTVFLAIPLAFTAGILFATL). At 108–162 (SCLHIWIIMPFVKTCLMVLPSVQTIWRSVTDVIIAPLCTSIGRICSSVSLQVSHD) the chain is on the cytoplasmic side.

This sequence belongs to the caveolin family. As to quaternary structure, monomer or homodimer. Interacts with CAV1; the interaction forms a stable heterooligomeric complex that is required for targeting to lipid rafts and for caveolae formation. Tyrosine phosphorylated forms do not form heterooligomers with the Tyr-19-phosphorylated form existing as a monomer or dimer, and the Tyr-27-form as a monomer only. Interacts (tyrosine phosphorylated form) with the SH2 domain-containing proteins, RASA1, NCK1 and SRC. Interacts (tyrosine phosphorylated form) with INSR, the interaction (Tyr-27-phosphorylated form) is increased on insulin stimulation. Interacts (Tyr-19 phosphorylated form) with MAPK1 (phosphorylated form); the interaction, promoted by insulin, leads to nuclear location and MAPK1 activation. Interacts with STAT3; the interaction is increased on insulin-induced tyrosine phosphorylation leading to STAT activation. Post-translationally, phosphorylated on serine and tyrosine residues. CAV1 promotes phosphorylation on Ser-23 which then targets the complex to the plasma membrane, lipid rafts and caveolae. Phosphorylation on Ser-36 appears to modulate mitosis in endothelial cells. Phosphorylation on both Tyr-19 and Tyr-27 is required for insulin-induced 'Ser-727' phosphorylation of STAT3 and its activation. Phosphorylation on Tyr-19 is required for insulin-induced phosphorylation of MAPK1 and DNA binding of STAT3. Tyrosine phosphorylation is induced by both EGF and insulin (By. similarity).

It localises to the nucleus. The protein resides in the cytoplasm. It is found in the golgi apparatus membrane. Its subcellular location is the cell membrane. The protein localises to the membrane. It localises to the caveola. Its function is as follows. May act as a scaffolding protein within caveolar membranes. Interacts directly with G-protein alpha subunits and can functionally regulate their activity. Acts as an accessory protein in conjunction with CAV1 in targeting to lipid rafts and driving caveolae formation. The Ser-36 phosphorylated form has a role in modulating mitosis in endothelial cells. Positive regulator of cellular mitogenesis of the MAPK signaling pathway. Required for the insulin-stimulated nuclear translocation and activation of MAPK1 and STAT3, and the subsequent regulation of cell cycle progression. The polypeptide is Caveolin-2 (CAV2) (Atelerix albiventris (Middle-African hedgehog)).